The chain runs to 255 residues: MVLEVKNLSFKYSQKLILDKLSFSVPKNSITSILAPNGSGKTTLLKCLLGLLKPLEETEIKACNKDILPLKPYEKAKLIAYIPQVEYYAFNFSVLDFVLMGKATHLNLFAMPKAKHIKEATSVLERLDLESLKDQGINDLSGGQRQMVLLARSLLQRTPLLLLDEPTSALDLKNQALFFDAIKDEMKKRELSVLVNIHDPNLVARHSTHVVMLKDKKLFLQASTPIAMTSHNLSALYDTPLEAIWHDNKLVVYAL.

The ABC transporter domain maps to 3 to 240 (LEVKNLSFKY…HNLSALYDTP (238 aa)). 35-42 (APNGSGKT) is an ATP binding site.

This sequence belongs to the ABC transporter superfamily.

The protein localises to the cell inner membrane. Part of a binding-protein-dependent transport system for an iron chelatin. Probably responsible for energy coupling to the transport system (Potential). The protein is Probable iron chelatin transport ATP-binding protein HP_0888 of Helicobacter pylori (strain ATCC 700392 / 26695) (Campylobacter pylori).